The primary structure comprises 988 residues: Exportin-T (988 aa).

This sequence belongs to the exportin family. As to expression, expressed in young leaves, growing leaf blades, young floral organs and root tips.

It is found in the nucleus. The protein localises to the cytoplasm. Probable tRNA nucleus export receptor which regulates tRNA processing and facilitates tRNA translocation across the nuclear pore complex. Is required for proper activity of the shoot apical meristem (SAM) and correct leaf initiation at different developmental stages, and may play a role in floral patterning. The polypeptide is Exportin-T (PSD) (Arabidopsis thaliana (Mouse-ear cress)).